Consider the following 755-residue polypeptide: 1,4-alpha-glucan branching enzyme GlgB (755 aa).

The active-site Nucleophile is the Asp-431. Catalysis depends on Glu-484, which acts as the Proton donor.

It belongs to the glycosyl hydrolase 13 family. GlgB subfamily. As to quaternary structure, monomer.

The enzyme catalyses Transfers a segment of a (1-&gt;4)-alpha-D-glucan chain to a primary hydroxy group in a similar glucan chain.. It participates in glycan biosynthesis; glycogen biosynthesis. Functionally, catalyzes the formation of the alpha-1,6-glucosidic linkages in glycogen by scission of a 1,4-alpha-linked oligosaccharide from growing alpha-1,4-glucan chains and the subsequent attachment of the oligosaccharide to the alpha-1,6 position. This is 1,4-alpha-glucan branching enzyme GlgB from Prochlorococcus marinus (strain NATL2A).